A 214-amino-acid chain; its full sequence is Galactokinase (214 aa).

Positions 47, 53, 54, and 56 each coordinate alpha-D-galactose. ATP-binding residues include Gly149, Gly151, Ser153, and Ser154. Asp199 lines the alpha-D-galactose pocket. Asp199 serves as the catalytic Proton acceptor.

The protein belongs to the GHMP kinase family. GalK subfamily.

It catalyses the reaction alpha-D-galactose + ATP = alpha-D-galactose 1-phosphate + ADP + H(+). It functions in the pathway carbohydrate metabolism; galactose metabolism. Galactokinase is a key enzyme in the galactose metabolism where it catalyzes the conversion of alpha-D-galactose to galactose 1-phosphate. Can also induce the transcription of the gal genes in response to the organism being challenged with galactose as the sole source of carbon. The polypeptide is Galactokinase (Candida maltosa (Yeast)).